A 469-amino-acid polypeptide reads, in one-letter code: Neuraminidase (469 aa).

Over 1–6 (MNPNQK) the chain is Intravirion. The chain crosses the membrane as a helical span at residues 7–29 (IITIGSVSLTIATACSLMQIAIL). Positions 11–33 (GSVSLTIATACSLMQIAILATTV) are involved in apical transport and lipid raft association. The Virion surface portion of the chain corresponds to 30–469 (ATTVTLHFKQ…DGANINFMPI (440 aa)). Residues 36-88 (HFKQHECDSPASNQVMPCEPIIIERNITEIVYLNNTTIEKEICPEVVEYRNWS) are hypervariable stalk region. N-linked (GlcNAc...) asparagine; by host glycosylation is found at asparagine 61, asparagine 69, asparagine 70, and asparagine 86. The segment at 91–469 (QCQITGFAPF…DGANINFMPI (379 aa)) is head of neuraminidase. Disulfide bonds link cysteine 92–cysteine 417, cysteine 124–cysteine 129, cysteine 183–cysteine 230, cysteine 232–cysteine 237, cysteine 278–cysteine 291, cysteine 280–cysteine 289, cysteine 318–cysteine 337, and cysteine 421–cysteine 447. Residue arginine 118 participates in substrate binding. N-linked (GlcNAc...) asparagine; by host glycosylation is present at asparagine 146. Aspartate 151 serves as the catalytic Proton donor/acceptor. A substrate-binding site is contributed by arginine 152. N-linked (GlcNAc...) asparagine; by host glycans are attached at residues asparagine 200 and asparagine 234. 276–277 (EE) serves as a coordination point for substrate. Arginine 292 lines the substrate pocket. Residues aspartate 293, glycine 297, and aspartate 324 each coordinate Ca(2+). Positions 325–349 (TPRNDDSSSNSNCRDPNNERGNPGV) are disordered. Arginine 371 lines the substrate pocket. The N-linked (GlcNAc...) asparagine; by host glycan is linked to asparagine 402. The active-site Nucleophile is the tyrosine 406.

It belongs to the glycosyl hydrolase 34 family. Homotetramer. Ca(2+) serves as cofactor. N-glycosylated.

It localises to the virion membrane. The protein localises to the host apical cell membrane. The catalysed reaction is Hydrolysis of alpha-(2-&gt;3)-, alpha-(2-&gt;6)-, alpha-(2-&gt;8)- glycosidic linkages of terminal sialic acid residues in oligosaccharides, glycoproteins, glycolipids, colominic acid and synthetic substrates.. Inhibited by the neuraminidase inhibitors zanamivir (Relenza) and oseltamivir (Tamiflu). These drugs interfere with the release of progeny virus from infected cells and are effective against all influenza strains. Resistance to neuraminidase inhibitors is quite rare. Functionally, catalyzes the removal of terminal sialic acid residues from viral and cellular glycoconjugates. Cleaves off the terminal sialic acids on the glycosylated HA during virus budding to facilitate virus release. Additionally helps virus spread through the circulation by further removing sialic acids from the cell surface. These cleavages prevent self-aggregation and ensure the efficient spread of the progeny virus from cell to cell. Otherwise, infection would be limited to one round of replication. Described as a receptor-destroying enzyme because it cleaves a terminal sialic acid from the cellular receptors. May facilitate viral invasion of the upper airways by cleaving the sialic acid moieties on the mucin of the airway epithelial cells. Likely to plays a role in the budding process through its association with lipid rafts during intracellular transport. May additionally display a raft-association independent effect on budding. Plays a role in the determination of host range restriction on replication and virulence. Sialidase activity in late endosome/lysosome traffic seems to enhance virus replication. This Aves (Human) protein is Neuraminidase.